The primary structure comprises 626 residues: Basic helix-loop-helix ARNT-like protein 1 (626 aa).

The segment at 1 to 58 is disordered; sequence MADQRMDISSTISDFMSPGPTDLLSSSLGTSGVDCNRKRKGSATDYQESMDTDKDDPH. Ser-17 carries the post-translational modification Phosphoserine; by GSK3-beta. A compositionally biased stretch (low complexity) spans 17–32; it reads SPGPTDLLSSSLGTSG. A Phosphothreonine; by GSK3-beta modification is found at Thr-21. The Nuclear localization signal signature appears at 36-41; sequence NRKRKG. In terms of domain architecture, bHLH spans 72–125; the sequence is NAREAHSQIEKRRRDKMNSFIDELASLVPTCNAMSRKLDKLTVLRMAVQHMKTL. Ser-78 carries the phosphoserine modification. A Phosphoserine; by CK2 modification is found at Ser-90. The Nuclear export signal 1 signature appears at 142 to 152; that stretch reads LSDDELKHLIL. The PAS 1 domain occupies 143–215; it reads SDDELKHLIL…EQLSSSDTAP (73 aa). Lys-252 is covalently cross-linked (Glycyl lysine isopeptide (Lys-Gly) (interchain with G-Cter in SUMO2 and SUMO3)). Lys-259 participates in a covalent cross-link: Glycyl lysine isopeptide (Lys-Gly) (interchain with G-Cter in SUMO); alternate. A Glycyl lysine isopeptide (Lys-Gly) (interchain with G-Cter in SUMO2); alternate cross-link involves residue Lys-259. The PAS 2 domain occupies 326–396; the sequence is PQPVNGEIRV…ECHRQVLQTR (71 aa). Positions 361 to 369 match the Nuclear export signal 2 motif; the sequence is LAYLPQELL. Residues 401–444 enclose the PAC domain; that stretch reads TNCYKFKIKDGSFITLRSRWFSFMNPWTKEVEYIVSTNTVVLAN. Disordered regions lie at residues 459-492 and 511-595; these read SPHSMDSMLPSGEGGPKRTHPTVPGIPGGTRAGA and GSSP…SPSN. The tract at residues 508–588 is interaction with CIART; the sequence is RIRGSSPSSC…IGIDMIDNDQ (81 aa). The segment covering 511-521 has biased composition (low complexity); that stretch reads GSSPSSCGSSP. At Lys-538 the chain carries N6-acetyllysine.

In terms of assembly, component of the circadian clock oscillator which includes the CRY1/2 proteins, CLOCK or NPAS2, BMAL1 or BMAL2, CSNK1D and/or CSNK1E, TIMELESS and the PER1/2/3 proteins. Forms a heterodimer with CLOCK. The CLOCK-BMAL1 heterodimer is required for E-box-dependent transactivation, for CLOCK nuclear translocation and degradation, and, for phosphorylation of both CLOCK and BMAL1. Part of a nuclear complex which also includes RACK1 and PRKCA; RACK1 and PRKCA are recruited to the complex in a circadian manner. Interacts with NPAS2. Interacts with EZH2. Interacts with SUMO3. Interacts with SIRT1. Interacts with AHR. Interacts with ID1, ID2 and ID3. Interacts with DDX4. Interacts with OGT. Interacts with EED and SUZ12. Interacts with MTA1. Interacts with CIART. Interacts with HSP90. Interacts with KAT2B and EP300. Interacts with BHLHE40/DEC1 and BHLHE41/DEC2. Interacts with RELB and the interaction is enhanced in the presence of CLOCK. Interacts with PER1, PER2, CRY1 and CRY2 and this interaction requires a translocation to the nucleus. Interaction of the CLOCK-BMAL1 heterodimer with PER or CRY inhibits transcription activation. Interaction of the CLOCK-BMAL1 with CRY1 is independent of DNA but with PER2 is off DNA. The CLOCK-BMAL1 heterodimer interacts with GSK3B. Interacts with KDM5A. Interacts with KMT2A; in a circadian manner. Interacts with UBE3A. Interacts with PRKCG. Interacts with MAGEL2. Interacts with NCOA2. Interacts with THRAP3. The CLOCK-BMAL1 heterodimer interacts with PASD1. Interacts with PASD1. Interacts with USP9X. Interacts with PIWIL2 (via PIWI domain). Interacts with HDAC3. Interacts with HNF4A. Post-translationally, ubiquitinated, leading to its proteasomal degradation. Deubiquitinated by USP9X. In terms of processing, O-glycosylated; contains O-GlcNAc. O-glycosylation by OGT prevents protein degradation by inhibiting ubiquitination. It also stabilizes the CLOCK-BMAL1 heterodimer thereby increasing CLOCK-BMAL1-mediated transcription of genes in the negative loop of the circadian clock such as PER1/2/3 and CRY1/2. Acetylated on Lys-538 by CLOCK during the repression phase of the circadian cycle. Acetylation facilitates recruitment of CRY1 protein and initiates the repression phase of the circadian cycle. Acetylated at Lys-538 by KAT5 during the activation phase of the cycle, leading to recruitment of the positive transcription elongation factor b (P-TEFb) and BRD4, followed by productive elongation of circadian transcripts. Deacetylated by SIRT1, which may result in decreased protein stability. Post-translationally, phosphorylated upon dimerization with CLOCK. Phosphorylation enhances the transcriptional activity, alters the subcellular localization and decreases the stability of the CLOCK-BMAL1 heterodimer by promoting its degradation. Phosphorylation shows circadian variations in the liver with a peak between CT10 to CT14. Phosphorylation at Ser-90 by CK2 is essential for its nuclear localization, its interaction with CLOCK and controls CLOCK nuclear entry. Dephosphorylation at Ser-78 is important for dimerization with CLOCK and transcriptional activity. In terms of processing, sumoylated on Lys-259 upon dimerization with CLOCK. Predominantly conjugated to poly-SUMO2/3 rather than SUMO1 and the level of these conjugates undergo rhythmic variation, peaking at CT9-CT12. Sumoylation localizes it exclusively to the PML body and promotes its ubiquitination in the PML body, ubiquitin-dependent proteasomal degradation and the transcriptional activity of the CLOCK-BMAL1 heterodimer. Undergoes lysosome-mediated degradation in a time-dependent manner in the liver.

Its subcellular location is the nucleus. The protein resides in the cytoplasm. It is found in the PML body. Transcriptional activator which forms a core component of the circadian clock. The circadian clock, an internal time-keeping system, regulates various physiological processes through the generation of approximately 24 hour circadian rhythms in gene expression, which are translated into rhythms in metabolism and behavior. It is derived from the Latin roots 'circa' (about) and 'diem' (day) and acts as an important regulator of a wide array of physiological functions including metabolism, sleep, body temperature, blood pressure, endocrine, immune, cardiovascular, and renal function. Consists of two major components: the central clock, residing in the suprachiasmatic nucleus (SCN) of the brain, and the peripheral clocks that are present in nearly every tissue and organ system. Both the central and peripheral clocks can be reset by environmental cues, also known as Zeitgebers (German for 'timegivers'). The predominant Zeitgeber for the central clock is light, which is sensed by retina and signals directly to the SCN. The central clock entrains the peripheral clocks through neuronal and hormonal signals, body temperature and feeding-related cues, aligning all clocks with the external light/dark cycle. Circadian rhythms allow an organism to achieve temporal homeostasis with its environment at the molecular level by regulating gene expression to create a peak of protein expression once every 24 hours to control when a particular physiological process is most active with respect to the solar day. Transcription and translation of core clock components (CLOCK, NPAS2, BMAL1, BMAL2, PER1, PER2, PER3, CRY1 and CRY2) plays a critical role in rhythm generation, whereas delays imposed by post-translational modifications (PTMs) are important for determining the period (tau) of the rhythms (tau refers to the period of a rhythm and is the length, in time, of one complete cycle). A diurnal rhythm is synchronized with the day/night cycle, while the ultradian and infradian rhythms have a period shorter and longer than 24 hours, respectively. Disruptions in the circadian rhythms contribute to the pathology of cardiovascular diseases, cancer, metabolic syndromes and aging. A transcription/translation feedback loop (TTFL) forms the core of the molecular circadian clock mechanism. Transcription factors, CLOCK or NPAS2 and BMAL1 or BMAL2, form the positive limb of the feedback loop, act in the form of a heterodimer and activate the transcription of core clock genes and clock-controlled genes (involved in key metabolic processes), harboring E-box elements (5'-CACGTG-3') within their promoters. The core clock genes: PER1/2/3 and CRY1/2 which are transcriptional repressors form the negative limb of the feedback loop and interact with the CLOCK|NPAS2-BMAL1|BMAL2 heterodimer inhibiting its activity and thereby negatively regulating their own expression. This heterodimer also activates nuclear receptors NR1D1/2 and RORA/B/G, which form a second feedback loop and which activate and repress BMAL1 transcription, respectively. BMAL1 positively regulates myogenesis and negatively regulates adipogenesis via the transcriptional control of the genes of the canonical Wnt signaling pathway. Plays a role in normal pancreatic beta-cell function; regulates glucose-stimulated insulin secretion via the regulation of antioxidant genes NFE2L2/NRF2 and its targets SESN2, PRDX3, CCLC and CCLM. Negatively regulates the mTORC1 signaling pathway; regulates the expression of MTOR and DEPTOR. Controls diurnal oscillations of Ly6C inflammatory monocytes; rhythmic recruitment of the PRC2 complex imparts diurnal variation to chemokine expression that is necessary to sustain Ly6C monocyte rhythms. Regulates the expression of HSD3B2, STAR, PTGS2, CYP11A1, CYP19A1 and LHCGR in the ovary and also the genes involved in hair growth. Plays an important role in adult hippocampal neurogenesis by regulating the timely entry of neural stem/progenitor cells (NSPCs) into the cell cycle and the number of cell divisions that take place prior to cell-cycle exit. Regulates the circadian expression of CIART and KLF11. The CLOCK-BMAL1 heterodimer regulates the circadian expression of SERPINE1/PAI1, VWF, B3, CCRN4L/NOC, NAMPT, DBP, MYOD1, PPARGC1A, PPARGC1B, SIRT1, GYS2, F7, NGFR, GNRHR, BHLHE40/DEC1, ATF4, MTA1, KLF10 and also genes implicated in glucose and lipid metabolism. Promotes rhythmic chromatin opening, regulating the DNA accessibility of other transcription factors. The NPAS2-BMAL1 heterodimer positively regulates the expression of MAOA, F7 and LDHA and modulates the circadian rhythm of daytime contrast sensitivity by regulating the rhythmic expression of adenylate cyclase type 1 (ADCY1) in the retina. The preferred binding motif for the CLOCK-BMAL1 heterodimer is 5'-CACGTGA-3', which contains a flanking adenine nucleotide at the 3-prime end of the canonical 6-nucleotide E-box sequence. CLOCK specifically binds to the half-site 5'-CAC-3', while BMAL1 binds to the half-site 5'-GTGA-3'. The CLOCK-BMAL1 heterodimer also recognizes the non-canonical E-box motifs 5'-AACGTGA-3' and 5'-CATGTGA-3'. Essential for the rhythmic interaction of CLOCK with ASS1 and plays a critical role in positively regulating CLOCK-mediated acetylation of ASS1. Plays a role in protecting against lethal sepsis by limiting the expression of immune checkpoint protein CD274 in macrophages in a PKM2-dependent manner. Regulates the diurnal rhythms of skeletal muscle metabolism via transcriptional activation of genes promoting triglyceride synthesis (DGAT2) and metabolic efficiency (COQ10B). The polypeptide is Basic helix-loop-helix ARNT-like protein 1 (BMAL1) (Mesocricetus auratus (Golden hamster)).